The chain runs to 142 residues: Large ribosomal subunit protein uL11 (142 aa).

Belongs to the universal ribosomal protein uL11 family. In terms of assembly, part of the ribosomal stalk of the 50S ribosomal subunit. Interacts with L10 and the large rRNA to form the base of the stalk. L10 forms an elongated spine to which L12 dimers bind in a sequential fashion forming a multimeric L10(L12)X complex. Post-translationally, one or more lysine residues are methylated.

In terms of biological role, forms part of the ribosomal stalk which helps the ribosome interact with GTP-bound translation factors. The protein is Large ribosomal subunit protein uL11 of Shewanella oneidensis (strain ATCC 700550 / JCM 31522 / CIP 106686 / LMG 19005 / NCIMB 14063 / MR-1).